Here is a 211-residue protein sequence, read N- to C-terminus: ATP phosphoribosyltransferase (211 aa).

The protein belongs to the ATP phosphoribosyltransferase family. Short subfamily. In terms of assembly, heteromultimer composed of HisG and HisZ subunits.

The protein resides in the cytoplasm. It catalyses the reaction 1-(5-phospho-beta-D-ribosyl)-ATP + diphosphate = 5-phospho-alpha-D-ribose 1-diphosphate + ATP. Its pathway is amino-acid biosynthesis; L-histidine biosynthesis; L-histidine from 5-phospho-alpha-D-ribose 1-diphosphate: step 1/9. Functionally, catalyzes the condensation of ATP and 5-phosphoribose 1-diphosphate to form N'-(5'-phosphoribosyl)-ATP (PR-ATP). Has a crucial role in the pathway because the rate of histidine biosynthesis seems to be controlled primarily by regulation of HisG enzymatic activity. This is ATP phosphoribosyltransferase from Hahella chejuensis (strain KCTC 2396).